We begin with the raw amino-acid sequence, 560 residues long: Protein DETOXIFICATION 45, chloroplastic (560 aa).

The transit peptide at 1–75 (MESSRVVVGG…QTNPDCGVVK (75 aa)) directs the protein to the chloroplast. Helical transmembrane passes span 109-129 (LVML…TLLM), 147-167 (VSMA…LSVA), 209-229 (ALVL…LASG), 250-270 (FLVL…LQGI), 280-300 (PVYC…LFIY), 308-328 (GAAI…LILL), 353-373 (FVLG…SMAA), 389-411 (VWLA…IASS), 426-446 (FVLK…GMSF), 466-486 (GVLF…FDGL), 495-515 (YAAC…LYAP), and 523-543 (VWVG…SRLM).

Belongs to the multi antimicrobial extrusion (MATE) (TC 2.A.66.1) family. As to expression, ubiquitous.

It localises to the plastid. The protein resides in the chloroplast membrane. The chain is Protein DETOXIFICATION 45, chloroplastic from Arabidopsis thaliana (Mouse-ear cress).